We begin with the raw amino-acid sequence, 121 residues long: Large ribosomal subunit protein bL20 (121 aa).

Belongs to the bacterial ribosomal protein bL20 family.

Functionally, binds directly to 23S ribosomal RNA and is necessary for the in vitro assembly process of the 50S ribosomal subunit. It is not involved in the protein synthesizing functions of that subunit. The sequence is that of Large ribosomal subunit protein bL20 from Orientia tsutsugamushi (strain Boryong) (Rickettsia tsutsugamushi).